Here is a 460-residue protein sequence, read N- to C-terminus: Homocitrate synthase (460 aa).

Positions 3-258 (VGILDSTLRE…IEVVKLNKLQ (256 aa)) constitute a Pyruvate carboxyltransferase domain. Arg-11 is a 2-oxoglutarate binding site. Glu-12 provides a ligand contact to Mg(2+). Residues His-75, Arg-135, and Thr-169 each contribute to the 2-oxoglutarate site. His-197 and His-199 together coordinate Mg(2+). The active-site Proton acceptor is His-291.

Belongs to the alpha-IPM synthase/homocitrate synthase family. Homocitrate synthase LYS20/LYS21 subfamily. In terms of assembly, forms a homotetramer in the absence of lysine, and is in hexadecamer-octamer equilibrium in the presence of lysine. Mg(2+) is required as a cofactor. Mn(2+) serves as cofactor.

The catalysed reaction is acetyl-CoA + 2-oxoglutarate + H2O = (2R)-homocitrate + CoA + H(+). Its pathway is amino-acid biosynthesis; L-lysine biosynthesis via AAA pathway; L-alpha-aminoadipate from 2-oxoglutarate: step 1/5. Its activity is regulated as follows. Inhibited by lysine. Its function is as follows. Catalyzes the aldol-type condensation of 2-oxoglutarate with acetyl-CoA to yield homocitrate. Carries out the first step of the alpha-aminoadipate (AAA) lysine biosynthesis pathway. This is Homocitrate synthase from Sulfurisphaera tokodaii (strain DSM 16993 / JCM 10545 / NBRC 100140 / 7) (Sulfolobus tokodaii).